A 228-amino-acid chain; its full sequence is HTH-type transcriptional regulator ArcR (228 aa).

22–141 is an a nucleoside 3',5'-cyclic phosphate binding site; it reads SYINIPVGVL…VKLFSLLSET (120 aa). Positions 155 to 228 constitute an HTH crp-type domain; sequence KLAKERVTKI…SKNWLVSKDL (74 aa). Residues 188–207 constitute a DNA-binding region (H-T-H motif); the sequence is IQLLSDMAGISRETTSHIIN.

The protein localises to the cytoplasm. Functionally, positively regulates the expression of the arcABDCR operon under anaerobic conditions, thus playing an essential role in arginine catabolism. May also control the expression of genes encoding proteins which are involved in anaerobic metabolism. Can bind cyclic AMP. In Staphylococcus epidermidis (strain ATCC 35984 / DSM 28319 / BCRC 17069 / CCUG 31568 / BM 3577 / RP62A), this protein is HTH-type transcriptional regulator ArcR (arcR).